The following is a 261-amino-acid chain: uncharacterized protein (261 aa).

The signal sequence occupies residues 1–22; that stretch reads MIHSKKLTLGICLVLLIILIGG. The N-palmitoyl cysteine moiety is linked to residue C23. A lipid anchor (S-diacylglycerol cysteine) is attached at C23.

This sequence belongs to the staphylococcal tandem lipoprotein family.

The protein resides in the cell membrane. This is an uncharacterized protein from Staphylococcus aureus (strain USA300).